Reading from the N-terminus, the 184-residue chain is Ethylene-responsive transcription factor ERF024 (184 aa).

Residues 1–21 (MQGTSKDNGGRHPLYRGVRQR) are disordered. The AP2/ERF DNA-binding region spans 14 to 72 (LYRGVRQRKNSNKWVSEIREPRKPNRIWLGTFSTPEMAAIAYDVAALALKGSQAELNFP).

Belongs to the AP2/ERF transcription factor family. ERF subfamily.

The protein localises to the nucleus. In terms of biological role, probably acts as a transcriptional activator. Binds to the GCC-box pathogenesis-related promoter element. May be involved in the regulation of gene expression by stress factors and by components of stress signal transduction pathways. The sequence is that of Ethylene-responsive transcription factor ERF024 (ERF024) from Arabidopsis thaliana (Mouse-ear cress).